Here is a 273-residue protein sequence, read N- to C-terminus: 4-hydroxy-tetrahydrodipicolinate reductase (273 aa).

Residues Gly11–Met16, Gly102–Thr104, and Ser126–Phe129 each bind NAD(+). The active-site Proton donor/acceptor is His159. His160 is a binding site for (S)-2,3,4,5-tetrahydrodipicolinate. The active-site Proton donor is Lys163. Gly169–Thr170 contributes to the (S)-2,3,4,5-tetrahydrodipicolinate binding site.

This sequence belongs to the DapB family. In terms of assembly, homotetramer.

It is found in the cytoplasm. The enzyme catalyses (S)-2,3,4,5-tetrahydrodipicolinate + NAD(+) + H2O = (2S,4S)-4-hydroxy-2,3,4,5-tetrahydrodipicolinate + NADH + H(+). It catalyses the reaction (S)-2,3,4,5-tetrahydrodipicolinate + NADP(+) + H2O = (2S,4S)-4-hydroxy-2,3,4,5-tetrahydrodipicolinate + NADPH + H(+). It participates in amino-acid biosynthesis; L-lysine biosynthesis via DAP pathway; (S)-tetrahydrodipicolinate from L-aspartate: step 4/4. Its function is as follows. Catalyzes the conversion of 4-hydroxy-tetrahydrodipicolinate (HTPA) to tetrahydrodipicolinate. In Buchnera aphidicola subsp. Cinara cedri (strain Cc), this protein is 4-hydroxy-tetrahydrodipicolinate reductase.